Consider the following 67-residue polypeptide: Large ribosomal subunit protein uL29 (67 aa).

This sequence belongs to the universal ribosomal protein uL29 family. As to quaternary structure, part of the 50S ribosomal subunit. Contacts protein L23 and trigger factor when it is complexed with the ribosome.

Binds the 23S rRNA. One of the proteins that surrounds the polypeptide exit tunnel on the outside of the subunit. The protein is Large ribosomal subunit protein uL29 (rpmC) of Deinococcus radiodurans (strain ATCC 13939 / DSM 20539 / JCM 16871 / CCUG 27074 / LMG 4051 / NBRC 15346 / NCIMB 9279 / VKM B-1422 / R1).